Consider the following 502-residue polypeptide: ATP synthase subunit alpha (502 aa).

Residues 117-139 form a disordered region; that stretch reads GMGPVLTSKTRPIESPAPGVMDR. 169 to 176 is a binding site for ATP; it reads GDRQTGKT.

The protein belongs to the ATPase alpha/beta chains family. In terms of assembly, F-type ATPases have 2 components, CF(1) - the catalytic core - and CF(0) - the membrane proton channel. CF(1) has five subunits: alpha(3), beta(3), gamma(1), delta(1), epsilon(1). CF(0) has three main subunits: a(1), b(2) and c(9-12). The alpha and beta chains form an alternating ring which encloses part of the gamma chain. CF(1) is attached to CF(0) by a central stalk formed by the gamma and epsilon chains, while a peripheral stalk is formed by the delta and b chains.

Its subcellular location is the cell membrane. The catalysed reaction is ATP + H2O + 4 H(+)(in) = ADP + phosphate + 5 H(+)(out). In terms of biological role, produces ATP from ADP in the presence of a proton gradient across the membrane. The alpha chain is a regulatory subunit. This chain is ATP synthase subunit alpha, found in Bacillus licheniformis (strain ATCC 14580 / DSM 13 / JCM 2505 / CCUG 7422 / NBRC 12200 / NCIMB 9375 / NCTC 10341 / NRRL NRS-1264 / Gibson 46).